Here is a 254-residue protein sequence, read N- to C-terminus: Cyclin homolog (254 aa).

The protein belongs to the cyclin family. Cyclin D subfamily.

In terms of biological role, may be highly relevant to the process of cellular transformation and rapid T-cell proliferation effected by HVS during latent infections of T-cells in susceptible hosts. The sequence is that of Cyclin homolog (72) from Saimiriine herpesvirus 2 (strain 11) (SaHV-2).